A 238-amino-acid chain; its full sequence is Ribosomal RNA small subunit methyltransferase G (238 aa).

S-adenosyl-L-methionine is bound by residues Gly-77, Phe-82, 128-129, and Arg-147; that span reads AE.

It belongs to the methyltransferase superfamily. RNA methyltransferase RsmG family.

It localises to the cytoplasm. Its function is as follows. Specifically methylates the N7 position of guanine in position 535 of 16S rRNA. The polypeptide is Ribosomal RNA small subunit methyltransferase G (Listeria innocua serovar 6a (strain ATCC BAA-680 / CLIP 11262)).